The chain runs to 550 residues: Hydroxylamine reductase (550 aa).

Residues C3, C6, C18, and C25 each coordinate [2Fe-2S] cluster. Residues H249, E273, C317, C405, C433, C458, E492, and K494 each coordinate hybrid [4Fe-2O-2S] cluster. C405 bears the Cysteine persulfide mark.

Belongs to the HCP family. The cofactor is [2Fe-2S] cluster. It depends on hybrid [4Fe-2O-2S] cluster as a cofactor.

Its subcellular location is the cytoplasm. The catalysed reaction is A + NH4(+) + H2O = hydroxylamine + AH2 + H(+). Catalyzes the reduction of hydroxylamine to form NH(3) and H(2)O. The polypeptide is Hydroxylamine reductase (Proteus mirabilis (strain HI4320)).